A 301-amino-acid chain; its full sequence is UDP-N-acetylenolpyruvoylglucosamine reductase 1 (301 aa).

The region spanning 29–196 (KIGGPADILI…LEAVFQLQAG (168 aa)) is the FAD-binding PCMH-type domain. Residue Arg-174 is part of the active site. The active-site Proton donor is the Ser-225. The active site involves Glu-295.

Belongs to the MurB family. It depends on FAD as a cofactor.

Its subcellular location is the cytoplasm. The catalysed reaction is UDP-N-acetyl-alpha-D-muramate + NADP(+) = UDP-N-acetyl-3-O-(1-carboxyvinyl)-alpha-D-glucosamine + NADPH + H(+). It participates in cell wall biogenesis; peptidoglycan biosynthesis. Cell wall formation. In Bacillus cereus (strain ATCC 14579 / DSM 31 / CCUG 7414 / JCM 2152 / NBRC 15305 / NCIMB 9373 / NCTC 2599 / NRRL B-3711), this protein is UDP-N-acetylenolpyruvoylglucosamine reductase 1 (murB1).